We begin with the raw amino-acid sequence, 804 residues long: uncharacterized protein (804 aa).

This is an uncharacterized protein from Methanothermobacter marburgensis (strain ATCC BAA-927 / DSM 2133 / JCM 14651 / NBRC 100331 / OCM 82 / Marburg) (Methanobacterium thermoautotrophicum).